The chain runs to 178 residues: Ribosome maturation factor RimM (178 aa).

The 78-residue stretch at alanine 101–phenylalanine 178 folds into the PRC barrel domain.

This sequence belongs to the RimM family. As to quaternary structure, binds ribosomal protein uS19.

The protein resides in the cytoplasm. An accessory protein needed during the final step in the assembly of 30S ribosomal subunit, possibly for assembly of the head region. Essential for efficient processing of 16S rRNA. May be needed both before and after RbfA during the maturation of 16S rRNA. It has affinity for free ribosomal 30S subunits but not for 70S ribosomes. This chain is Ribosome maturation factor RimM, found in Pseudomonas fluorescens (strain Pf0-1).